The sequence spans 182 residues: MRYTTDIKKSPPQLLKTFAVCDISLYDICDYNVTRDQCKELGCCFYKGVCYKKVVPIYVQMFSTLIVLVTGIIIITIIYRIVQEIKRQMKLSMNSTPKASKKRSAFRPFSRDPSRAPSRSPSRTSSTLSSRSPTTAPTTAPTTDPATDPATDPATDPATDPATDPATDPATAPPTDPSENPP.

Topologically, residues 1–56 (MRYTTDIKKSPPQLLKTFAVCDISLYDICDYNVTRDQCKELGCCFYKGVCYKKVVP) are extracellular. A helical membrane pass occupies residues 57–77 (IYVQMFSTLIVLVTGIIIITI). Residues 78-182 (IYRIVQEIKR…PPTDPSENPP (105 aa)) lie on the Cytoplasmic side of the membrane. Positions 91–182 (LSMNSTPKAS…PPTDPSENPP (92 aa)) are disordered. Low complexity predominate over residues 115-170 (RAPSRSPSRTSSTLSSRSPTTAPTTAPTTDPATDPATDPATDPATDPATDPATDPA). Over residues 171–182 (TAPPTDPSENPP) the composition is skewed to pro residues.

It localises to the membrane. The polypeptide is Testis-expressed protein 29 (Tex29) (Rattus norvegicus (Rat)).